The chain runs to 211 residues: Dephospho-CoA kinase (211 aa).

Positions 7 to 211 constitute a DPCK domain; that stretch reads LIGVIGRSGA…ILTRRGVLGE (205 aa). 15-20 contacts ATP; the sequence is GAGKNV.

The protein belongs to the CoaE family.

It is found in the cytoplasm. The catalysed reaction is 3'-dephospho-CoA + ATP = ADP + CoA + H(+). The protein operates within cofactor biosynthesis; coenzyme A biosynthesis; CoA from (R)-pantothenate: step 5/5. Its function is as follows. Catalyzes the phosphorylation of the 3'-hydroxyl group of dephosphocoenzyme A to form coenzyme A. The polypeptide is Dephospho-CoA kinase (Treponema pallidum (strain Nichols)).